The following is a 140-amino-acid chain: Nucleoside diphosphate kinase (140 aa).

The ATP site is built by lysine 11, phenylalanine 59, arginine 87, threonine 93, arginine 104, and asparagine 114. Catalysis depends on histidine 117, which acts as the Pros-phosphohistidine intermediate.

It belongs to the NDK family. As to quaternary structure, homotetramer. The cofactor is Mg(2+).

It is found in the cytoplasm. It catalyses the reaction a 2'-deoxyribonucleoside 5'-diphosphate + ATP = a 2'-deoxyribonucleoside 5'-triphosphate + ADP. The catalysed reaction is a ribonucleoside 5'-diphosphate + ATP = a ribonucleoside 5'-triphosphate + ADP. In terms of biological role, major role in the synthesis of nucleoside triphosphates other than ATP. The ATP gamma phosphate is transferred to the NDP beta phosphate via a ping-pong mechanism, using a phosphorylated active-site intermediate. This Rhodopseudomonas palustris (strain BisA53) protein is Nucleoside diphosphate kinase.